The chain runs to 165 residues: P2Y purinoceptor 4 (165 aa).

Residues 1–16 form a helical membrane-spanning segment; it reads SDTLYVLSLPTLVYYY. Over 17–30 the chain is Extracellular; the sequence is AARNHWPFGTGFCK. The chain crosses the membrane as a helical span at residues 31 to 51; it reads FVRFLFYWNLYCSVLFLTCIS. Residues 52–74 lie on the Cytoplasmic side of the membrane; sequence VHRYMGICHPLRALRWGRPRFAS. A helical membrane pass occupies residues 75-95; that stretch reads LLCLAVWLVVAGCLVPNLFFV. Topologically, residues 96 to 124 are extracellular; the sequence is TTSPNGTTILCHDTTRPEEFDHYVHFSSA. Asn100 carries an N-linked (GlcNAc...) asparagine glycan. The chain crosses the membrane as a helical span at residues 125–145; the sequence is VMVLLFGLPFLVTLVCYGLMA. Over 146–165 the chain is Cytoplasmic; it reads RRLYRPLPGAGQSSSRLRSL.

The protein belongs to the G-protein coupled receptor 1 family.

Its subcellular location is the cell membrane. Its function is as follows. Receptor for UTP and UDP coupled to G-proteins that activate a phosphatidylinositol-calcium second messenger system. The chain is P2Y purinoceptor 4 (P2RY4) from Cricetulus griseus (Chinese hamster).